The chain runs to 434 residues: Ribosomal RNA-processing protein 14 (434 aa).

Position 2 is an N-acetylserine (Ser2). Composition is skewed to basic and acidic residues over residues 32–58 (KSQEQWKAKKKTKEQSKNDKLKKLDPE), 70–79 (VMKKKEKDAK), and 95–105 (KQKEATSKVEG). The interval 32 to 257 (KSQEQWKAKK…RFKKGKKDSE (226 aa)) is disordered. The span at 121–140 (PDEDEEEEEDIKVIFDDEGN) shows a compositional bias: acidic residues. Basic and acidic residues predominate over residues 144-178 (LESKKDTTEPDRSVEKKSITEEEKLQRKKNLEALR). Coiled-coil stretches lie at residues 162–230 (ITEE…EIAS) and 293–360 (AKND…QKRK). Acidic residues predominate over residues 220 to 241 (EQEQDQDEIASDSDMEDIDSDL). Residues 375 to 392 (TISERQKRREENLRIRKD) are compositionally biased toward basic and acidic residues. Residues 375–434 (TISERQKRREENLRIRKDNKGKKRNKQEKMKRKYVGSAVPKKRAGFEGRLKTGKKKGGPK) are disordered. Basic residues-rich tracts occupy residues 393–408 (NKGKKRNKQEKMKRKY) and 425–434 (KTGKKKGGPK).

This sequence belongs to the SURF6 family. As to quaternary structure, component of the 90S and 60S pre-ribosomal particles.

The protein resides in the nucleus. The protein localises to the nucleolus. Its function is as follows. Involved in ribosome biogenesis and cell polarity. Required for the synthesis of both 40S and 60S ribosomal subunits and may also play some direct role in correct positioning of the mitotic spindle during mitosis. The sequence is that of Ribosomal RNA-processing protein 14 (RRP14) from Saccharomyces cerevisiae (strain ATCC 204508 / S288c) (Baker's yeast).